Reading from the N-terminus, the 432-residue chain is 3-phosphoshikimate 1-carboxyvinyltransferase (432 aa).

Residues Lys-23, Ser-24, and Arg-28 each coordinate 3-phosphoshikimate. Phosphoenolpyruvate is bound at residue Lys-23. Phosphoenolpyruvate-binding residues include Gly-95 and Arg-123. Ser-167, Gln-169, Asp-317, and Lys-344 together coordinate 3-phosphoshikimate. Gln-169 lines the phosphoenolpyruvate pocket. Asp-317 functions as the Proton acceptor in the catalytic mechanism. 2 residues coordinate phosphoenolpyruvate: Arg-348 and Arg-390.

It belongs to the EPSP synthase family. Monomer.

The protein localises to the cytoplasm. The catalysed reaction is 3-phosphoshikimate + phosphoenolpyruvate = 5-O-(1-carboxyvinyl)-3-phosphoshikimate + phosphate. The protein operates within metabolic intermediate biosynthesis; chorismate biosynthesis; chorismate from D-erythrose 4-phosphate and phosphoenolpyruvate: step 6/7. In terms of biological role, catalyzes the transfer of the enolpyruvyl moiety of phosphoenolpyruvate (PEP) to the 5-hydroxyl of shikimate-3-phosphate (S3P) to produce enolpyruvyl shikimate-3-phosphate and inorganic phosphate. The polypeptide is 3-phosphoshikimate 1-carboxyvinyltransferase (Staphylococcus aureus (strain bovine RF122 / ET3-1)).